The chain runs to 427 residues: Hydroxylamine reductase (427 aa).

Positions 3, 6, 15, and 21 each coordinate [4Fe-4S] cluster. Hybrid [4Fe-2O-2S] cluster is bound by residues histidine 129, glutamate 153, cysteine 197, cysteine 283, cysteine 311, cysteine 336, glutamate 370, and lysine 372. At cysteine 283 the chain carries Cysteine persulfide.

The protein belongs to the HCP family. [4Fe-4S] cluster serves as cofactor. Hybrid [4Fe-2O-2S] cluster is required as a cofactor.

The protein resides in the cytoplasm. The enzyme catalyses A + NH4(+) + H2O = hydroxylamine + AH2 + H(+). Catalyzes the reduction of hydroxylamine to form NH(3) and H(2)O. This Methanothermobacter thermautotrophicus (strain ATCC 29096 / DSM 1053 / JCM 10044 / NBRC 100330 / Delta H) (Methanobacterium thermoautotrophicum) protein is Hydroxylamine reductase.